A 216-amino-acid chain; its full sequence is Ribosome maturation factor RimP (216 aa).

This sequence belongs to the RimP family.

The protein localises to the cytoplasm. Its function is as follows. Required for maturation of 30S ribosomal subunits. This chain is Ribosome maturation factor RimP, found in Bartonella henselae (strain ATCC 49882 / DSM 28221 / CCUG 30454 / Houston 1) (Rochalimaea henselae).